A 286-amino-acid chain; its full sequence is Protein N-terminal amidase (286 aa).

The region spanning 1 to 286 is the CN hydrolase domain; sequence MKFGCVQFFP…NGIVVGELEK (286 aa). Residue Glu43 is the Proton acceptor of the active site. Catalysis depends on Lys121, which acts as the Proton donor. The active-site Nucleophile is the Cys155.

It belongs to the carbon-nitrogen hydrolase superfamily.

The protein resides in the cytoplasm. The protein localises to the nucleus. In terms of biological role, deamidates N-terminal Asn and Gln. Component of a targeting complex in the N-end rule pathway. The protein is Protein N-terminal amidase (nta1) of Schizosaccharomyces pombe (strain 972 / ATCC 24843) (Fission yeast).